Consider the following 695-residue polypeptide: tRNA wybutosine-synthesizing protein 4 (695 aa).

Residues Lys-38, Arg-88, Gly-115, 146 to 147 (DY), 196 to 197 (DL), and Glu-224 contribute to the S-adenosyl-L-methionine site. The Proton donor; for both methylation and methoxycarbonylation activities role is filled by Arg-88. Catalysis depends on Tyr-229, which acts as the Proton acceptor; for methoxycarbonylation activity.

It belongs to the methyltransferase superfamily. LCMT family.

It is found in the cytoplasm. The protein resides in the mitochondrion. The catalysed reaction is 7-[(3S)-3-amino-3-carboxypropyl]wyosine(37) in tRNA(Phe) + S-adenosyl-L-methionine = 7-[(3S)-(3-amino-3-methoxycarbonyl)propyl]wyosine(37) in tRNA(Phe) + S-adenosyl-L-homocysteine. It carries out the reaction 7-[(3S)-(3-amino-3-methoxycarbonyl)propyl]wyosine(37) in tRNA(Phe) + S-adenosyl-L-methionine + CO2 = wybutosine(37) in tRNA(Phe) + S-adenosyl-L-homocysteine + 2 H(+). It functions in the pathway tRNA modification; wybutosine-tRNA(Phe) biosynthesis. Functionally, S-adenosyl-L-methionine-dependent methyltransferase that acts as a component of the wybutosine biosynthesis pathway. Wybutosine is a hyper modified guanosine with a tricyclic base found at the 3'-position adjacent to the anticodon of eukaryotic phenylalanine tRNA. Catalyzes the final 2 independent reactions, methylation of the alpha-carboxy group of wybutosine-72 to form wybutosine-58, and methoxycarbonylation of alpha-amino group of wybutosine-58 through the fixation of CO(2) to complete wybutosine. In Saccharomyces cerevisiae (strain ATCC 204508 / S288c) (Baker's yeast), this protein is tRNA wybutosine-synthesizing protein 4 (PPM2).